A 338-amino-acid polypeptide reads, in one-letter code: tRNA N6-adenosine threonylcarbamoyltransferase (338 aa).

Fe cation-binding residues include His-111 and His-115. Substrate contacts are provided by residues 134-138 (LVSGG), Asp-167, Gly-180, and Asn-272. Asp-300 contributes to the Fe cation binding site.

This sequence belongs to the KAE1 / TsaD family. It depends on Fe(2+) as a cofactor.

It localises to the cytoplasm. The catalysed reaction is L-threonylcarbamoyladenylate + adenosine(37) in tRNA = N(6)-L-threonylcarbamoyladenosine(37) in tRNA + AMP + H(+). In terms of biological role, required for the formation of a threonylcarbamoyl group on adenosine at position 37 (t(6)A37) in tRNAs that read codons beginning with adenine. Is involved in the transfer of the threonylcarbamoyl moiety of threonylcarbamoyl-AMP (TC-AMP) to the N6 group of A37, together with TsaE and TsaB. TsaD likely plays a direct catalytic role in this reaction. The polypeptide is tRNA N6-adenosine threonylcarbamoyltransferase (Shewanella oneidensis (strain ATCC 700550 / JCM 31522 / CIP 106686 / LMG 19005 / NCIMB 14063 / MR-1)).